A 217-amino-acid chain; its full sequence is Pyridoxine/pyridoxamine 5'-phosphate oxidase (217 aa).

Substrate-binding positions include 14–17 (RKSY) and K72. FMN contacts are provided by residues 67-72 (RVVLIK), 82-83 (YT), R88, and K89. Substrate-binding residues include Y129, R133, and S137. Residues 146 to 147 (QS) and W190 contribute to the FMN site. 196-198 (RLH) is a substrate binding site. R200 contributes to the FMN binding site.

It belongs to the pyridoxamine 5'-phosphate oxidase family. Homodimer. The cofactor is FMN.

It catalyses the reaction pyridoxamine 5'-phosphate + O2 + H2O = pyridoxal 5'-phosphate + H2O2 + NH4(+). It carries out the reaction pyridoxine 5'-phosphate + O2 = pyridoxal 5'-phosphate + H2O2. The protein operates within cofactor metabolism; pyridoxal 5'-phosphate salvage; pyridoxal 5'-phosphate from pyridoxamine 5'-phosphate: step 1/1. Its pathway is cofactor metabolism; pyridoxal 5'-phosphate salvage; pyridoxal 5'-phosphate from pyridoxine 5'-phosphate: step 1/1. Its function is as follows. Catalyzes the oxidation of either pyridoxine 5'-phosphate (PNP) or pyridoxamine 5'-phosphate (PMP) into pyridoxal 5'-phosphate (PLP). The chain is Pyridoxine/pyridoxamine 5'-phosphate oxidase from Acidovorax sp. (strain JS42).